Consider the following 436-residue polypeptide: MTLPTVAIVGRPNVGKSTLFNRIAGERISIVEDVEGVTRDRIYTSAEWLNRQFSLIDTGGIDDVDAPFMEQIKHQAGIAMTEADVIVFVVSGKEGVTDADEYVARILYKTNKPVILAVNKVDNPEMRADIYDFYSLGLGDPYPVSSVHGIGTGDVLDAIVGNLPTEVEEENPDIIRFSLIGRPNVGKSSLINAILGEDRVIASPIAGTTRDAIDTNFVDSEGQEYTMIDTAGMRKSGKVYENTEKYSIMRSMRAIDRSDVVLMVINAEEGIREYDKRIAGFAHEAGKGIIIVVNKWDTIKKDNHTVANWEADIRDQFQFLSYAPIVFVSAKTKQRLNKLPEMIKRISESQNRRISSAVLNDVIMDAIAINPTPTDKGKRLKIFYGTQVSVKPPTFVIFVNEEELMHFSYMRFLENQIRQAFGFEGTPIHLIARKRK.

EngA-type G domains follow at residues 4-167 and 175-351; these read PTVA…PTEV and IRFS…ESQN. Residues 10-17, 57-61, 119-122, 181-188, 229-233, and 294-297 contribute to the GTP site; these read GRPNVGKS, DTGGI, NKVD, DTAGM, and NKWD. Residues 352-436 enclose the KH-like domain; that stretch reads RRISSAVLND…PIHLIARKRK (85 aa).

The protein belongs to the TRAFAC class TrmE-Era-EngA-EngB-Septin-like GTPase superfamily. EngA (Der) GTPase family. Associates with the 50S ribosomal subunit.

Functionally, GTPase that plays an essential role in the late steps of ribosome biogenesis. The sequence is that of GTPase Der from Streptococcus thermophilus (strain CNRZ 1066).